The following is a 102-amino-acid chain: Small ribosomal subunit protein bS6 (102 aa).

It belongs to the bacterial ribosomal protein bS6 family.

In terms of biological role, binds together with bS18 to 16S ribosomal RNA. The sequence is that of Small ribosomal subunit protein bS6 from Deinococcus deserti (strain DSM 17065 / CIP 109153 / LMG 22923 / VCD115).